The sequence spans 177 residues: Translation initiation factor IF-3 (177 aa).

It belongs to the IF-3 family. In terms of assembly, monomer.

Its subcellular location is the cytoplasm. IF-3 binds to the 30S ribosomal subunit and shifts the equilibrium between 70S ribosomes and their 50S and 30S subunits in favor of the free subunits, thus enhancing the availability of 30S subunits on which protein synthesis initiation begins. In Rhizobium meliloti (strain 1021) (Ensifer meliloti), this protein is Translation initiation factor IF-3.